A 639-amino-acid polypeptide reads, in one-letter code: uncharacterized protein (639 aa).

The N-terminal stretch at 1 to 16 (MLTLYLFTATCCFVCA) is a signal peptide. 2 disordered regions span residues 80-128 (RRRA…SDKL) and 432-488 (QTAT…TSRT). 2 stretches are compositionally biased toward polar residues: residues 108–122 (TYAT…TASP) and 432–446 (QTAT…QQQP). The span at 465–480 (HGDEPHSDGELRRESH) shows a compositional bias: basic and acidic residues.

This is an uncharacterized protein from Human cytomegalovirus (strain Merlin) (HHV-5).